The chain runs to 142 residues: Sec-independent protein translocase protein TatB (142 aa).

Residues 2–22 (FANVGWGEMLVLVIAGLVILG) traverse the membrane as a helical segment. The tract at residues 89–142 (DDSIFTGKFDQNGKSEKPEQKPEKPQSAPGPAAAVPDQPAGGRSGSTPYDTDAT) is disordered. The span at 99–112 (QNGKSEKPEQKPEK) shows a compositional bias: basic and acidic residues. Positions 133–142 (GSTPYDTDAT) are enriched in polar residues.

It belongs to the TatB family. The Tat system comprises two distinct complexes: a TatABC complex, containing multiple copies of TatA, TatB and TatC subunits, and a separate TatA complex, containing only TatA subunits. Substrates initially bind to the TatABC complex, which probably triggers association of the separate TatA complex to form the active translocon.

It localises to the cell membrane. In terms of biological role, part of the twin-arginine translocation (Tat) system that transports large folded proteins containing a characteristic twin-arginine motif in their signal peptide across membranes. Together with TatC, TatB is part of a receptor directly interacting with Tat signal peptides. TatB may form an oligomeric binding site that transiently accommodates folded Tat precursor proteins before their translocation. This Mycolicibacterium vanbaalenii (strain DSM 7251 / JCM 13017 / BCRC 16820 / KCTC 9966 / NRRL B-24157 / PYR-1) (Mycobacterium vanbaalenii) protein is Sec-independent protein translocase protein TatB.